The following is a 184-amino-acid chain: MADLKDERGNPIHLTDAYGNPVQLSDEFGNPMHITGVASSAPQYKDSVTGNIAEYPTEAPPAGVAAGTGAAATTAAGVTTSETTTGQEHHGSLGEHLRRSGSSSSSSSEDDGQGGRRKKSIKDKIKDKLGGGKHKDEQTPTTATTTGPTTTTTTTGAAADQHHEKKGILEKIKEKLPGHHNHHP.

The disordered stretch occupies residues T49 to P184. The segment covering P60–G86 has biased composition (low complexity). Basic and acidic residues-rich tracts occupy residues Q87–R98 and K122–Q138. Over residues T139 to A159 the composition is skewed to low complexity. Over residues D160–P177 the composition is skewed to basic and acidic residues.

It belongs to the plant dehydrin family.

LEA protein are late embryogenesis abundant in higher plant seed embryos. There are two subsets of LEA proteins (5a, and 5b), the first ones are expressed when the cotyledon weight reach 80 mg and the second set are expressed above 100 mg. The function of those proteins is not known. The sequence is that of Late embryogenesis abundant protein from Raphanus sativus (Radish).